The sequence spans 177 residues: ATP synthase subunit b (177 aa).

The chain crosses the membrane as a helical span at residues 29–49; sequence FFFVLAIFLIVLAVIGTFVVP.

This sequence belongs to the ATPase B chain family. F-type ATPases have 2 components, F(1) - the catalytic core - and F(0) - the membrane proton channel. F(1) has five subunits: alpha(3), beta(3), gamma(1), delta(1), epsilon(1). F(0) has three main subunits: a(1), b(2) and c(10-14). The alpha and beta chains form an alternating ring which encloses part of the gamma chain. F(1) is attached to F(0) by a central stalk formed by the gamma and epsilon chains, while a peripheral stalk is formed by the delta and b chains.

The protein resides in the cell membrane. In terms of biological role, f(1)F(0) ATP synthase produces ATP from ADP in the presence of a proton or sodium gradient. F-type ATPases consist of two structural domains, F(1) containing the extramembraneous catalytic core and F(0) containing the membrane proton channel, linked together by a central stalk and a peripheral stalk. During catalysis, ATP synthesis in the catalytic domain of F(1) is coupled via a rotary mechanism of the central stalk subunits to proton translocation. Functionally, component of the F(0) channel, it forms part of the peripheral stalk, linking F(1) to F(0). This Mycolicibacterium paratuberculosis (strain ATCC BAA-968 / K-10) (Mycobacterium paratuberculosis) protein is ATP synthase subunit b.